The following is a 207-amino-acid chain: U1 small nuclear ribonucleoprotein C (207 aa).

The segment at 4 to 36 adopts a Matrin-type zinc-finger fold; sequence YYCDYCDTYLTHDSPSVRKQHNAGYKHKANVRI. Composition is skewed to pro residues over residues 105-115 and 122-131; these read PPQGYMPPPGV and PGAPLPPPPQ. The tract at residues 105–207 is disordered; the sequence is PPQGYMPPPG…PSAESPESNE (103 aa). Residues 132–144 are compositionally biased toward low complexity; that stretch reads NGILRPPGMAPIP. Positions 162-183 are enriched in pro residues; it reads GPPPNYNGLPPPPPYHTNPAAP. Positions 184 to 207 are enriched in low complexity; the sequence is PSGNFNNPNLNNPNPSAESPESNE.

The protein belongs to the U1 small nuclear ribonucleoprotein C family. U1 snRNP is composed of the 7 core Sm proteins B/B', D1, D2, D3, E, F and G that assemble in a heptameric protein ring on the Sm site of the small nuclear RNA to form the core snRNP, and at least 3 U1 snRNP-specific proteins U1-70K, U1-A and U1-C. U1-C interacts with U1 snRNA and the 5' splice-site region of the pre-mRNA.

The protein resides in the nucleus. Functionally, component of the spliceosomal U1 snRNP, which is essential for recognition of the pre-mRNA 5' splice-site and the subsequent assembly of the spliceosome. U1-C is directly involved in initial 5' splice-site recognition for both constitutive and regulated alternative splicing. The interaction with the 5' splice-site seems to precede base-pairing between the pre-mRNA and the U1 snRNA. Stimulates commitment or early (E) complex formation by stabilizing the base pairing of the 5' end of the U1 snRNA and the 5' splice-site region. This Arabidopsis thaliana (Mouse-ear cress) protein is U1 small nuclear ribonucleoprotein C.